Consider the following 152-residue polypeptide: Cytochrome c-type biogenesis protein CcmE (152 aa).

Topologically, residues 1–8 (MQARRKTR) are cytoplasmic. The helical; Signal-anchor for type II membrane protein transmembrane segment at 9 to 29 (LYIVLAVLAGLGLTVSLTLYA) threads the bilayer. The Periplasmic portion of the chain corresponds to 30-152 (LSSNIDLFYT…MTPEKTGAQP (123 aa)). Heme-binding residues include H130 and Y134. A disordered region spans residues 133–152 (NYTPPEVKNAMTPEKTGAQP).

The protein belongs to the CcmE/CycJ family.

It localises to the cell inner membrane. In terms of biological role, heme chaperone required for the biogenesis of c-type cytochromes. Transiently binds heme delivered by CcmC and transfers the heme to apo-cytochromes in a process facilitated by CcmF and CcmH. The polypeptide is Cytochrome c-type biogenesis protein CcmE (Klebsiella pneumoniae (strain 342)).